A 465-amino-acid polypeptide reads, in one-letter code: MPKKAKPTGSGKEEGPAPCKQMKLEAAGGPSALNFDSPSSLFESLISPIKTETFFKEFWEQKPLLIQRDDPALATYYGSLFKLTDLKSLCSRGMYYGRDVNVCRCVNGKKKVLNKDGKAHFLQLRKDFDQKRATIQFHQPQRFKDELWRIQEKLECYFGSLVGSNVYITPAGSQGLPPHYDDVEVFILQLEGEKHWRLYHPTVPLAREYSVEAEERIGRPVHEFMLKPGDLLYFPRGTIHQADTPAGLAHSTHVTISTYQNNSWGDFLLDTISGLVFDTAKEDVELRTGIPRQLLLQVESTTVATRRLSGFLRTLADRLEGTKELLSSDMKKDFIMHRLPPYSAGDGAELSTPGGKLPRLDSVVRLQFKDHIVLTVLPDQDQSDEAQEKMVYIYHSLKNSRETHMMGNEEETEFHGLRFPLSHLDALKQIWNSPAISVKDLKLTTDEEKESLVLSLWTECLIQVV.

A JmjC domain is found at 139–271; sequence QPQRFKDELW…NSWGDFLLDT (133 aa). The Fe cation site is built by histidine 179, aspartate 181, and histidine 240. Position 309 is a phosphoserine (serine 309).

The protein belongs to the ROX family. MINA53 subfamily. It depends on Fe(2+) as a cofactor. As to expression, expressed in liver, skeletal muscle, heart, pancreas, and placenta. Not detected in brain, lung or kidney. Expressed in several lung cancer tissues, but is barely detected in the adjacent non-cancerous tissues. Also highly expressed in several esophageal squamous cell carcinoma (ESCC), and colon cancer tissues, and in various cancer cell lines.

The protein localises to the nucleus. The protein resides in the nucleolus. It catalyses the reaction L-histidyl-[protein] + 2-oxoglutarate + O2 = (3S)-3-hydroxy-L-histidyl-[protein] + succinate + CO2. The catalysed reaction is L-histidyl-[ribosomal protein uL15] + 2-oxoglutarate + O2 = (3S)-3-hydroxy-L-histidyl-[ribosomal protein uL15] + succinate + CO2. Its function is as follows. Oxygenase that can act as both a histone lysine demethylase and a ribosomal histidine hydroxylase. Is involved in the demethylation of trimethylated 'Lys-9' on histone H3 (H3K9me3), leading to an increase in ribosomal RNA expression. Also catalyzes the hydroxylation of 60S ribosomal protein L27a on 'His-39'. May play an important role in cell growth and survival. May be involved in ribosome biogenesis, most likely during the assembly process of pre-ribosomal particles. The sequence is that of Ribosomal oxygenase 2 from Homo sapiens (Human).